A 529-amino-acid chain; its full sequence is BAR/IMD domain-containing adapter protein 2-like 2 (529 aa).

An IMD domain is found at 1–239; the sequence is MAPEMDQFYR…HSPGLLGPVL (239 aa). Disordered stretches follow at residues 221–332 and 399–529; these read EASR…GGAR and NPLN…PLIR. Phosphoserine occurs at positions 231, 272, and 304. Residues 301 to 317 show a composition bias toward low complexity; sequence SASSLYSSSTQRSRSNS. Positions 321 to 331 are enriched in gly residues; it reads RPGGGGGGGGA. In terms of domain architecture, SH3 spans 329-392; that stretch reads GGARRVRALV…PEAYVKPLDE (64 aa). The span at 439 to 459 shows a compositional bias: polar residues; the sequence is GNSTASSDYWDGQSRSRTPSH. The segment covering 473–484 has biased composition (low complexity); it reads PSSRRSSMGSMG. Residues serine 479 and serine 482 each carry the phosphoserine modification.

The protein localises to the cell membrane. It localises to the cell junction. It is found in the cytoplasmic vesicle membrane. Functionally, phosphoinositides-binding protein that induces the formation of planar or gently curved membrane structures. Binds to phosphoinositides, including to phosphatidylinositol 4,5-bisphosphate (PtdIns(4,5)P2) headgroups. There seems to be no clear preference for a specific phosphoinositide. The chain is BAR/IMD domain-containing adapter protein 2-like 2 (BAIAP2L2) from Bos taurus (Bovine).